The sequence spans 384 residues: Cobalt-precorrin-5B C(1)-methyltransferase (384 aa).

Belongs to the CbiD family.

It carries out the reaction Co-precorrin-5B + S-adenosyl-L-methionine = Co-precorrin-6A + S-adenosyl-L-homocysteine. It participates in cofactor biosynthesis; adenosylcobalamin biosynthesis; cob(II)yrinate a,c-diamide from sirohydrochlorin (anaerobic route): step 6/10. Functionally, catalyzes the methylation of C-1 in cobalt-precorrin-5B to form cobalt-precorrin-6A. This Marinomonas sp. (strain MWYL1) protein is Cobalt-precorrin-5B C(1)-methyltransferase.